The following is a 77-amino-acid chain: MAAIEVGRVCIKTLGREAGNTCVIVEVLDKNFVVIDGGVKRRRCNLKHVEPTDKKVDLEKAASTEEVKLALDAAGLL.

Belongs to the eukaryotic ribosomal protein eL14 family.

The sequence is that of Large ribosomal subunit protein eL14 from Methanococcus maripaludis (strain C7 / ATCC BAA-1331).